Consider the following 178-residue polypeptide: ATP-dependent protease subunit HslV (178 aa).

Thr-7 is a catalytic residue. Positions 162, 165, and 168 each coordinate Na(+).

It belongs to the peptidase T1B family. HslV subfamily. In terms of assembly, a double ring-shaped homohexamer of HslV is capped on each side by a ring-shaped HslU homohexamer. The assembly of the HslU/HslV complex is dependent on binding of ATP.

The protein localises to the cytoplasm. It catalyses the reaction ATP-dependent cleavage of peptide bonds with broad specificity.. With respect to regulation, allosterically activated by HslU binding. Functionally, protease subunit of a proteasome-like degradation complex believed to be a general protein degrading machinery. The polypeptide is ATP-dependent protease subunit HslV (Leptothrix cholodnii (strain ATCC 51168 / LMG 8142 / SP-6) (Leptothrix discophora (strain SP-6))).